We begin with the raw amino-acid sequence, 509 residues long: MESESESSSTHSSCDRFLDAEDEFFYDSFSNHYDCLNSSPPANLRRRRLPMDTDSSSSSSTSSLESCEKRSTVGENDELEVSLVDFETIEIDVDVTDSANSSIDSISEKGEDFEVIDSCTDTEKNMGENDSGRVDPFTVTTLNDERGEIYTGPEYTSTDWSLTSLVIRSIEFQVSLMITFIRFPPWLISKCLSFVFDPYRTMRRGRRYLVSWIVGLCDSGLKDDKPVLELVRRVTWGLFCAVYVGIMLFALLVSAFMISGFVITYLAHEPLVIKESLNFDYTKSSPEAYVPISSCAGVAFGLSGKESIETGKVKGLKDRTEITVSMTLPESEYNRNLGMFQVRVDFLSASGHVLASSRRPCMVKFSSEPIRLVQTLLKIAPLVTGYVSEIQTLNLKLKGLVEKDIIPTACLKIMIEQRAEFRPGAGIPEIYDASLFLESKLPFLKRIIWNWRKTLFVWISMSLFIMELLFALVFFRPLIIPRTGQRTQQRDGTHSINNNLYLDGQAGSR.

The disordered stretch occupies residues 33–73 (YDCLNSSPPANLRRRRLPMDTDSSSSSSTSSLESCEKRSTV). Residues 52-63 (DTDSSSSSSTSS) are compositionally biased toward low complexity. Helical transmembrane passes span 238–258 (LFCAVYVGIMLFALLVSAFMI) and 455–475 (LFVWISMSLFIMELLFALVFF).

This sequence belongs to the seipin family. As to expression, expressed in seeds, seedlings, leaves, stems and roots. Not detected in flowers.

The protein resides in the endoplasmic reticulum membrane. In terms of biological role, involved in lipid metabolism and lipid droplet (LD) morphology, number, and size. Supports the formation of small-sized LDs and modulates triacylglycerol accumulation. Induces probably a reorganization of the endoplasmic reticulum into LD-forming domains. This chain is Seipin-3, found in Arabidopsis thaliana (Mouse-ear cress).